Here is a 43-residue protein sequence, read N- to C-terminus: Omega-agatoxin-Aa3c (43 aa).

Disulfide bonds link Cys-2–Cys-19, Cys-9–Cys-25, and Cys-27–Cys-38.

It belongs to the neurotoxin 04 (omega-agtx) family. 03 (type II/III omega-agtx) subfamily. In terms of tissue distribution, expressed by the venom gland.

Its subcellular location is the secreted. Omega-agatoxins are antagonists of voltage-gated calcium channels (Cav). The polypeptide is Omega-agatoxin-Aa3c (Agelenopsis aperta (North American funnel-web spider)).